An 89-amino-acid chain; its full sequence is Small ribosomal subunit protein uS17 (89 aa).

This sequence belongs to the universal ribosomal protein uS17 family. Part of the 30S ribosomal subunit.

One of the primary rRNA binding proteins, it binds specifically to the 5'-end of 16S ribosomal RNA. This Polaromonas sp. (strain JS666 / ATCC BAA-500) protein is Small ribosomal subunit protein uS17.